The following is a 54-amino-acid chain: Sec-independent protein translocase protein TatA (54 aa).

The chain crosses the membrane as a helical span at residues 1–21; sequence MGMSFSHLLIVLLIIFVLFGA.

It belongs to the TatA/E family. As to quaternary structure, the Tat system comprises two distinct complexes: a TatABC complex, containing multiple copies of TatA, TatB and TatC subunits, and a separate TatA complex, containing only TatA subunits. Substrates initially bind to the TatABC complex, which probably triggers association of the separate TatA complex to form the active translocon.

It localises to the cell inner membrane. Its function is as follows. Part of the twin-arginine translocation (Tat) system that transports large folded proteins containing a characteristic twin-arginine motif in their signal peptide across membranes. TatA could form the protein-conducting channel of the Tat system. In Rickettsia canadensis (strain McKiel), this protein is Sec-independent protein translocase protein TatA.